Here is a 434-residue protein sequence, read N- to C-terminus: 4-hydroxy-3-methylbut-2-en-1-yl diphosphate synthase (flavodoxin) (434 aa).

Residues 1–15 (MQSEAQSPRSSQICS) are compositionally biased toward polar residues. The segment at 1–24 (MQSEAQSPRSSQICSTEPVFGGHQ) is disordered. [4Fe-4S] cluster-binding residues include cysteine 322, cysteine 325, cysteine 368, and glutamate 375.

The protein belongs to the IspG family. The cofactor is [4Fe-4S] cluster.

The catalysed reaction is (2E)-4-hydroxy-3-methylbut-2-enyl diphosphate + oxidized [flavodoxin] + H2O + 2 H(+) = 2-C-methyl-D-erythritol 2,4-cyclic diphosphate + reduced [flavodoxin]. The protein operates within isoprenoid biosynthesis; isopentenyl diphosphate biosynthesis via DXP pathway; isopentenyl diphosphate from 1-deoxy-D-xylulose 5-phosphate: step 5/6. Functionally, converts 2C-methyl-D-erythritol 2,4-cyclodiphosphate (ME-2,4cPP) into 1-hydroxy-2-methyl-2-(E)-butenyl 4-diphosphate. The sequence is that of 4-hydroxy-3-methylbut-2-en-1-yl diphosphate synthase (flavodoxin) from Burkholderia cenocepacia (strain ATCC BAA-245 / DSM 16553 / LMG 16656 / NCTC 13227 / J2315 / CF5610) (Burkholderia cepacia (strain J2315)).